Here is a 193-residue protein sequence, read N- to C-terminus: Xanthine phosphoribosyltransferase (193 aa).

Positions 20 and 27 each coordinate xanthine. Position 128–132 (128–132 (ANGQA)) interacts with 5-phospho-alpha-D-ribose 1-diphosphate. Position 156 (lysine 156) interacts with xanthine.

This sequence belongs to the purine/pyrimidine phosphoribosyltransferase family. Xpt subfamily. Homodimer.

The protein resides in the cytoplasm. The enzyme catalyses XMP + diphosphate = xanthine + 5-phospho-alpha-D-ribose 1-diphosphate. The protein operates within purine metabolism; XMP biosynthesis via salvage pathway; XMP from xanthine: step 1/1. Converts the preformed base xanthine, a product of nucleic acid breakdown, to xanthosine 5'-monophosphate (XMP), so it can be reused for RNA or DNA synthesis. The polypeptide is Xanthine phosphoribosyltransferase (Streptococcus gordonii (strain Challis / ATCC 35105 / BCRC 15272 / CH1 / DL1 / V288)).